The primary structure comprises 485 residues: WAS/WASL-interacting protein family member 3 (485 aa).

A compositionally biased stretch (pro residues) spans 1 to 41 (MPVPPPPPPPPPPPPPPPPPLGAPPPPPLGAPPPPPPPGPP). Residues 1-485 (MPVPPPPPPP…QLSLKALPVR (485 aa)) form a disordered region. Short sequence motifs (profilin-binding motif) lie at residues 3 to 8 (VPPPPP), 11 to 16 (PPPPPP), and 31 to 36 (APPPPP). The 18-residue stretch at 56–73 (GRSALLADIQQGTRLRKV) folds into the WH2 domain. Residue Arg57 is modified to Asymmetric dimethylarginine. Residues 69-72 (RLRK) carry the RLRK motif. Ser161 is modified (phosphoserine). The span at 176–203 (PVPPRPSVPAPPPPTPPPPPPPPLPPAS) shows a compositional bias: pro residues. Phosphoserine is present on Ser211. Residues 212-246 (PPAPPTKVNPSVVPPPLPCAPPLPPPPPTPPPLPP) are compositionally biased toward pro residues. A compositionally biased stretch (low complexity) spans 247–262 (ASALSDKAVRPQLAPL). Pro residues-rich tracts occupy residues 263–278 (HLPP…PPCG) and 296–312 (PPAP…PPLP). A Phosphoserine modification is found at Ser392. Polar residues predominate over residues 392–405 (SPTTELSSKSQQPG). Residues 415 to 439 (AIDDFESKFTFHSMEDFPPPDEYKP) show a composition bias toward basic and acidic residues. The WASP-binding motif signature appears at 424-448 (TFHSMEDFPPPDEYKPCQKIYPSKV).

In terms of assembly, interacts with WASL, and monomeric and filamentous actin. As to expression, isoform 1 is expressed in brain and testis and isoform 2 is expressed only in brain (at protein level).

It localises to the cytoplasm. Its function is as follows. May be a regulator of cytoskeletal organization (Potential). May have a role in spermatogenesis. The protein is WAS/WASL-interacting protein family member 3 (Wipf3) of Mus musculus (Mouse).